Consider the following 676-residue polypeptide: E3 ubiquitin-protein ligase ICP0 (676 aa).

An RING-type zinc finger spans residues 13–52 (CCICLDAITGAARALPCLHAFCLACIRRWLEGRPTCPLCK). Disordered regions lie at residues 101–153 (DLTA…GGRA), 266–517 (HLIP…AGAQ), and 555–676 (AAIS…AWRQ). Over residues 123-153 (EAGGGAGGAEEAGEARGAGAGRAAGAAGGRA) the composition is skewed to gly residues. A compositionally biased stretch (acidic residues) spans 286-303 (SDSDSEGSEDDSWSESEE). Over residues 304 to 314 (SSSGLSTSDLT) the composition is skewed to low complexity. Residues 315 to 328 (AIDDTETEPETDAE) show a composition bias toward acidic residues. A compositionally biased stretch (polar residues) spans 351-361 (YVSTRGRQTPA). Low complexity-rich tracts occupy residues 375–388 (GRAA…SSRS) and 397–411 (LPAA…QARA). Residues 422 to 439 (GAGLGVAAGETAGWGAGS) are compositionally biased toward gly residues. Residues 440-450 (EEGRGERRARL) are compositionally biased toward basic and acidic residues. Residues 474-484 (TPAPAPAPAPA) are compositionally biased toward pro residues. Over residues 555 to 597 (AAISTRAPTPSPAGRAPAADPRRAGAPALAGAARAEVGRNGNP) the composition is skewed to low complexity.

The protein belongs to the simplexviruses ICp0 family. In terms of processing, auto-ubiquitinated. Transactivation activity is possibly regulated through phosphorylation by casein kinase II.

The catalysed reaction is S-ubiquitinyl-[E2 ubiquitin-conjugating enzyme]-L-cysteine + [acceptor protein]-L-lysine = [E2 ubiquitin-conjugating enzyme]-L-cysteine + N(6)-ubiquitinyl-[acceptor protein]-L-lysine.. In terms of biological role, evades nuclear antiviral defenses triggered by dsDNA viruses. Acts during the initial stages of lytic infection and the reactivation of latent viral genome. Prevents the antiviral effect of nuclear bodies by degrading host PML and SP100. The polypeptide is E3 ubiquitin-protein ligase ICP0 (BICP0) (Bovine herpesvirus 1.1 (strain Cooper) (BoHV-1)).